A 1002-amino-acid chain; its full sequence is ATP-dependent DNA helicase MPH1 (1002 aa).

The Helicase ATP-binding domain maps to 108–275 (IVRCALFENV…EVVNNLHISK (168 aa)). 121–128 (IPTGTGKT) serves as a coordination point for ATP. The DEAH box motif lies at 223 to 226 (DEAH). Residues 506–669 (DEETYIRKNK…ALEYTKSDRI (164 aa)) enclose the Helicase C-terminal domain. Residues 531 to 551 (ENRVEEEKKRQKEQAKLERTG) show a composition bias toward basic and acidic residues. Disordered stretches follow at residues 531 to 569 (ENRVEEEKKRQKEQAKLERTGRRTGSSEEAQLSGMNQKQ) and 799 to 843 (AKSQ…DSHT). Polar residues predominate over residues 553–568 (RTGSSEEAQLSGMNQK).

It belongs to the DEAD box helicase family. DEAH subfamily. FANCM sub-subfamily. As to quaternary structure, interacts with the MHF histone-fold complex to form the FANCM-MHF complex.

The protein resides in the nucleus. It carries out the reaction ATP + H2O = ADP + phosphate + H(+). Its function is as follows. ATP-dependent DNA helicase involved in DNA damage repair by homologous recombination and in genome maintenance. Capable of unwinding D-loops. Plays a role in limiting crossover recombinants during mitotic DNA double-strand break (DSB) repair. Component of a FANCM-MHF complex which promotes gene conversion at blocked replication forks, probably by reversal of the stalled fork. The polypeptide is ATP-dependent DNA helicase MPH1 (Kluyveromyces lactis (strain ATCC 8585 / CBS 2359 / DSM 70799 / NBRC 1267 / NRRL Y-1140 / WM37) (Yeast)).